We begin with the raw amino-acid sequence, 295 residues long: Ribosomal protein L11 methyltransferase (295 aa).

S-adenosyl-L-methionine is bound by residues threonine 138, glycine 161, aspartate 183, and asparagine 230.

It belongs to the methyltransferase superfamily. PrmA family.

The protein resides in the cytoplasm. It catalyses the reaction L-lysyl-[protein] + 3 S-adenosyl-L-methionine = N(6),N(6),N(6)-trimethyl-L-lysyl-[protein] + 3 S-adenosyl-L-homocysteine + 3 H(+). In terms of biological role, methylates ribosomal protein L11. The polypeptide is Ribosomal protein L11 methyltransferase (Bradyrhizobium diazoefficiens (strain JCM 10833 / BCRC 13528 / IAM 13628 / NBRC 14792 / USDA 110)).